The chain runs to 175 residues: Large ribosomal subunit protein uL10 (175 aa).

It belongs to the universal ribosomal protein uL10 family. Part of the ribosomal stalk of the 50S ribosomal subunit. The N-terminus interacts with L11 and the large rRNA to form the base of the stalk. The C-terminus forms an elongated spine to which L12 dimers bind in a sequential fashion forming a multimeric L10(L12)X complex.

Forms part of the ribosomal stalk, playing a central role in the interaction of the ribosome with GTP-bound translation factors. This Prochlorococcus marinus (strain SARG / CCMP1375 / SS120) protein is Large ribosomal subunit protein uL10.